A 305-amino-acid polypeptide reads, in one-letter code: Virulence plasmid integrase pGP7-D (305 aa).

The region spanning 13 to 99 (LTFGEASEIW…CYISFTKFLY (87 aa)) is the Core-binding (CB) domain. The region spanning 127–303 (VKTVSISKKE…GNSSVANIPT (177 aa)) is the Tyr recombinase domain. Active-site residues include Lys188 and Arg257. Tyr289 (O-(3'-phospho-DNA)-tyrosine intermediate) is an active-site residue.

The protein belongs to the 'phage' integrase family.

This Chlamydia muridarum (strain MoPn / Nigg) protein is Virulence plasmid integrase pGP7-D.